The chain runs to 279 residues: ESX-1 secretion-associated protein EspG1 (279 aa).

Belongs to the EspG family. As to quaternary structure, interacts specifically with ESX-1-dependent PE/PPE proteins.

The protein localises to the cytoplasm. Specific chaperone for cognate PE/PPE proteins. Plays an important role in preventing aggregation of PE/PPE dimers. The chain is ESX-1 secretion-associated protein EspG1 from Mycobacterium marinum (strain ATCC BAA-535 / M).